Consider the following 375-residue polypeptide: Alcohol dehydrogenase 1 (375 aa).

Residue S2 is modified to N-acetylserine. Residues C47, H68, C98, C101, C104, C112, and C175 each coordinate Zn(2+). NAD(+) contacts are provided by residues G200 to G205, D224, K229, L293 to V295, and R370.

Belongs to the zinc-containing alcohol dehydrogenase family. Class-I subfamily. As to quaternary structure, homodimer. The cofactor is Zn(2+).

The protein resides in the cytoplasm. It carries out the reaction a primary alcohol + NAD(+) = an aldehyde + NADH + H(+). It catalyses the reaction a secondary alcohol + NAD(+) = a ketone + NADH + H(+). The chain is Alcohol dehydrogenase 1 (ADH1) from Apteryx australis (Southern brown kiwi).